A 137-amino-acid polypeptide reads, in one-letter code: Large-conductance mechanosensitive channel (137 aa).

Transmembrane regions (helical) follow at residues 15–35 (VDLA…NSIV), 38–58 (IIMP…MFIQ), and 80–100 (GNFV…FLVV).

The protein belongs to the MscL family. Homopentamer.

It is found in the cell inner membrane. Its function is as follows. Channel that opens in response to stretch forces in the membrane lipid bilayer. May participate in the regulation of osmotic pressure changes within the cell. In Brucella anthropi (strain ATCC 49188 / DSM 6882 / CCUG 24695 / JCM 21032 / LMG 3331 / NBRC 15819 / NCTC 12168 / Alc 37) (Ochrobactrum anthropi), this protein is Large-conductance mechanosensitive channel.